Consider the following 253-residue polypeptide: Ditrans,polycis-undecaprenyl-diphosphate synthase ((2E,6E)-farnesyl-diphosphate specific) (253 aa).

Aspartate 26 is an active-site residue. Aspartate 26 contacts Mg(2+). Residues 27-30 (GNGR), tryptophan 31, arginine 39, histidine 43, and 71-73 (SSE) each bind substrate. The active-site Proton acceptor is asparagine 74. 3 residues coordinate substrate: tryptophan 75, arginine 77, and arginine 194. Histidine 199 is a binding site for Mg(2+). Position 200-202 (200-202 (RIS)) interacts with substrate. Position 213 (glutamate 213) interacts with Mg(2+).

It belongs to the UPP synthase family. In terms of assembly, homodimer. Mg(2+) serves as cofactor.

The enzyme catalyses 8 isopentenyl diphosphate + (2E,6E)-farnesyl diphosphate = di-trans,octa-cis-undecaprenyl diphosphate + 8 diphosphate. In terms of biological role, catalyzes the sequential condensation of isopentenyl diphosphate (IPP) with (2E,6E)-farnesyl diphosphate (E,E-FPP) to yield (2Z,6Z,10Z,14Z,18Z,22Z,26Z,30Z,34E,38E)-undecaprenyl diphosphate (di-trans,octa-cis-UPP). UPP is the precursor of glycosyl carrier lipid in the biosynthesis of bacterial cell wall polysaccharide components such as peptidoglycan and lipopolysaccharide. This is Ditrans,polycis-undecaprenyl-diphosphate synthase ((2E,6E)-farnesyl-diphosphate specific) from Shigella flexneri.